Reading from the N-terminus, the 273-residue chain is 4-hydroxy-tetrahydrodipicolinate reductase (273 aa).

NAD(+) is bound by residues 12–17 (GAGGRM) and Glu-38. Residue Arg-39 coordinates NADP(+). Residues 102 to 104 (GTT) and 126 to 129 (AANF) contribute to the NAD(+) site. His-159 (proton donor/acceptor) is an active-site residue. (S)-2,3,4,5-tetrahydrodipicolinate is bound at residue His-160. Lys-163 serves as the catalytic Proton donor. (S)-2,3,4,5-tetrahydrodipicolinate is bound at residue 169–170 (GT).

Belongs to the DapB family. Homotetramer.

The protein localises to the cytoplasm. It carries out the reaction (S)-2,3,4,5-tetrahydrodipicolinate + NAD(+) + H2O = (2S,4S)-4-hydroxy-2,3,4,5-tetrahydrodipicolinate + NADH + H(+). The enzyme catalyses (S)-2,3,4,5-tetrahydrodipicolinate + NADP(+) + H2O = (2S,4S)-4-hydroxy-2,3,4,5-tetrahydrodipicolinate + NADPH + H(+). Its pathway is amino-acid biosynthesis; L-lysine biosynthesis via DAP pathway; (S)-tetrahydrodipicolinate from L-aspartate: step 4/4. Its function is as follows. Catalyzes the conversion of 4-hydroxy-tetrahydrodipicolinate (HTPA) to tetrahydrodipicolinate. The sequence is that of 4-hydroxy-tetrahydrodipicolinate reductase from Shigella flexneri.